The chain runs to 688 residues: UvrABC system protein B (688 aa).

Positions 31-188 constitute a Helicase ATP-binding domain; the sequence is GRVNAGEPDV…RKFVSMQYQR (158 aa). 44–51 contributes to the ATP binding site; sequence GATGTGKS. Residues 97–120 carry the Beta-hairpin motif; the sequence is YYDYYQPEAYVPQTDTFIEKDSSV. The 154-residue stretch at 434-587 folds into the Helicase C-terminal domain; that stretch reads QIDDLLEQIR…QVAYNTEHGI (154 aa). The segment at 607–632 is disordered; it reads GEDTKKMLEGRGGGKRSPTPNLRREG. Residues 642–677 enclose the UVR domain; the sequence is ETIISDLNDQMLQAAGELKFELAARLRDELGDLKRE.

This sequence belongs to the UvrB family. As to quaternary structure, forms a heterotetramer with UvrA during the search for lesions. Interacts with UvrC in an incision complex.

The protein resides in the cytoplasm. In terms of biological role, the UvrABC repair system catalyzes the recognition and processing of DNA lesions. A damage recognition complex composed of 2 UvrA and 2 UvrB subunits scans DNA for abnormalities. Upon binding of the UvrA(2)B(2) complex to a putative damaged site, the DNA wraps around one UvrB monomer. DNA wrap is dependent on ATP binding by UvrB and probably causes local melting of the DNA helix, facilitating insertion of UvrB beta-hairpin between the DNA strands. Then UvrB probes one DNA strand for the presence of a lesion. If a lesion is found the UvrA subunits dissociate and the UvrB-DNA preincision complex is formed. This complex is subsequently bound by UvrC and the second UvrB is released. If no lesion is found, the DNA wraps around the other UvrB subunit that will check the other stand for damage. This chain is UvrABC system protein B, found in Clavibacter sepedonicus (Clavibacter michiganensis subsp. sepedonicus).